The sequence spans 361 residues: Microtubule-associated protein Jupiter (361 aa).

Over residues 1-15 the composition is skewed to polar residues; sequence MISNYDITDSKSSSK. 2 disordered regions span residues 1-38 and 70-99; these read MISN…TPRN and IGDN…TPGK. Residue Ser-24 is modified to Phosphoserine. Phosphothreonine is present on Thr-35. Basic and acidic residues predominate over residues 73 to 87; that stretch reads NPRRGQKPVDSHSRL. Phosphothreonine is present on Thr-96. Phosphoserine is present on Ser-105. Low complexity-rich tracts occupy residues 125-134 and 141-154; these read GSSTANTTNG and SGSV…VSSS. Disordered regions lie at residues 125-165 and 328-361; these read GSST…SGSR and GSTN…SGLW. A phosphoserine mark is found at Ser-143 and Ser-154. Over residues 155–165 the composition is skewed to polar residues; the sequence is TENLKMNSGSR.

The protein belongs to the MAP Jupiter family.

Its subcellular location is the nucleus. It is found in the cytoplasm. It localises to the cytoskeleton. The protein resides in the spindle. Functionally, binds to all microtubule populations. The polypeptide is Microtubule-associated protein Jupiter (Drosophila persimilis (Fruit fly)).